A 235-amino-acid polypeptide reads, in one-letter code: MAQTLNRSLTDLGALLHLVDPTLPIGGFNHSNGLETFVQQRVVESKATLEEYVQTQLLQNWIYNDGAYLSLAFDAMCEGNFDRLCELDWQLSATKVARESREGSFKLGVRLLKIFIRYETHTLLTAYQQAIAEKRVQGYFPIVFAMVAQAMGLSKADTLYAFYYNAAVGAITNGVKLIPLSQMDGQDILFDLRGSLVQAVELSFDPDEEWLGAATLANDIRAMQHEVLYTRLYMS.

It belongs to the UreF family. In terms of assembly, ureD, UreF and UreG form a complex that acts as a GTP-hydrolysis-dependent molecular chaperone, activating the urease apoprotein by helping to assemble the nickel containing metallocenter of UreC. The UreE protein probably delivers the nickel.

The protein resides in the cytoplasm. Its function is as follows. Required for maturation of urease via the functional incorporation of the urease nickel metallocenter. This chain is Urease accessory protein UreF, found in Haemophilus influenzae (strain 86-028NP).